We begin with the raw amino-acid sequence, 479 residues long: Chromosomal replication initiator protein DnaA (479 aa).

Positions 1-74 are domain I, interacts with DnaA modulators; it reads MFSGVVMAWQ…RSLTGVDSSI (74 aa). A domain II region spans residues 74–142; sequence ITDVRFLEKK…SVPKNNASIR (69 aa). A domain III, AAA+ region region spans residues 143–360; the sequence is ALHPRYTFDE…SAITAIGARA (218 aa). Positions 187, 189, 190, and 191 each coordinate ATP. A domain IV, binds dsDNA region spans residues 361-479; it reads RLMGGYIDMN…NLLSDKVKQI (119 aa).

This sequence belongs to the DnaA family. As to quaternary structure, oligomerizes as a right-handed, spiral filament on DNA at oriC.

It is found in the cytoplasm. In terms of biological role, plays an essential role in the initiation and regulation of chromosomal replication. ATP-DnaA binds to the origin of replication (oriC) to initiate formation of the DNA replication initiation complex once per cell cycle. Binds the DnaA box (a 9 base pair repeat at the origin) and separates the double-stranded (ds)DNA. Forms a right-handed helical filament on oriC DNA; dsDNA binds to the exterior of the filament while single-stranded (ss)DNA is stabiized in the filament's interior. The ATP-DnaA-oriC complex binds and stabilizes one strand of the AT-rich DNA unwinding element (DUE), permitting loading of DNA polymerase. After initiation quickly degrades to an ADP-DnaA complex that is not apt for DNA replication. Binds acidic phospholipids. This Desulfotalea psychrophila (strain LSv54 / DSM 12343) protein is Chromosomal replication initiator protein DnaA.